The chain runs to 373 residues: Dual-specificity RNA methyltransferase RlmN (373 aa).

Catalysis depends on Glu-101, which acts as the Proton acceptor. Residues Glu-107–Asp-350 form the Radical SAM core domain. An intrachain disulfide couples Cys-114 to Cys-355. Cys-121, Cys-125, and Cys-128 together coordinate [4Fe-4S] cluster. S-adenosyl-L-methionine-binding positions include Gly-179–Glu-180, Ser-211, Ser-233–His-235, and Asn-312. The active-site S-methylcysteine intermediate is Cys-355.

The protein belongs to the radical SAM superfamily. RlmN family. [4Fe-4S] cluster serves as cofactor.

The protein resides in the cytoplasm. The catalysed reaction is adenosine(2503) in 23S rRNA + 2 reduced [2Fe-2S]-[ferredoxin] + 2 S-adenosyl-L-methionine = 2-methyladenosine(2503) in 23S rRNA + 5'-deoxyadenosine + L-methionine + 2 oxidized [2Fe-2S]-[ferredoxin] + S-adenosyl-L-homocysteine. The enzyme catalyses adenosine(37) in tRNA + 2 reduced [2Fe-2S]-[ferredoxin] + 2 S-adenosyl-L-methionine = 2-methyladenosine(37) in tRNA + 5'-deoxyadenosine + L-methionine + 2 oxidized [2Fe-2S]-[ferredoxin] + S-adenosyl-L-homocysteine. Its function is as follows. Specifically methylates position 2 of adenine 2503 in 23S rRNA and position 2 of adenine 37 in tRNAs. m2A2503 modification seems to play a crucial role in the proofreading step occurring at the peptidyl transferase center and thus would serve to optimize ribosomal fidelity. The sequence is that of Dual-specificity RNA methyltransferase RlmN from Blochmanniella pennsylvanica (strain BPEN).